A 754-amino-acid chain; its full sequence is Polyadenylate-binding protein, cytoplasmic and nuclear (754 aa).

The segment covering 1-25 (MSAEVSTTPAADNVNGTPEATNAAA) has biased composition (polar residues). The disordered stretch occupies residues 1 to 52 (MSAEVSTTPAADNVNGTPEATNAAATSAPEVTAVESSSPTSPNNNNQPHSAS). The span at 36–46 (SSSPTSPNNNN) shows a compositional bias: low complexity. 4 RRM domains span residues 51–129 (ASLY…WSQR), 139–216 (GNVF…HHIS), 232–309 (TNIY…RAQK), and 335–465 (VNLY…LAQR). 2 disordered regions span residues 365-420 (KVMR…KKSD) and 595-648 (RGGG…EEAP). Over residues 366-420 (VMRDSTPAERTETPDSEKEKEVNKENEKKEDEEKAAEEKPKESDEEKKDETKKSD) the composition is skewed to basic and acidic residues. The segment covering 610-633 (GMRGPGYQGRGGPQGGPRPQGGRG) has biased composition (gly residues). Residues 634-648 (QNAAAQPAAGREEAP) are compositionally biased toward low complexity. The PABC domain occupies 649 to 726 (AGALTAQALN…ALSVYDEYMK (78 aa)). Residues 729-754 (GEGEAPADADKPKEAAKETATEENKS) are disordered.

Belongs to the polyadenylate-binding protein type-1 family.

It is found in the cytoplasm. It localises to the nucleus. Binds the poly(A) tail of mRNA. Appears to be an important mediator of the multiple roles of the poly(A) tail in mRNA biogenesis, stability and translation. In the nucleus, involved in both mRNA cleavage and polyadenylation. Is also required for efficient mRNA export to the cytoplasm. Acts in concert with a poly(A)-specific nuclease (PAN) to affect poly(A) tail shortening, which may occur concomitantly with either nucleocytoplasmic mRNA transport or translational initiation. In the cytoplasm, stimulates translation initiation and regulates mRNA decay through translation termination-coupled poly(A) shortening, probably mediated by PAN. The sequence is that of Polyadenylate-binding protein, cytoplasmic and nuclear (pab1) from Aspergillus clavatus (strain ATCC 1007 / CBS 513.65 / DSM 816 / NCTC 3887 / NRRL 1 / QM 1276 / 107).